A 585-amino-acid chain; its full sequence is Squalene epoxidase 2, mitochondrial (585 aa).

Residues 1–45 (MKPFVIRNLPRFQSTLRSSLLYTNHRPSSRFSLSTRRFTTGATYI) constitute a mitochondrion transit peptide. A helical membrane pass occupies residues 70-90 (AKIALDQFIASLFTFLLLYIL). FAD-binding positions include 132-133 (VA), 152-153 (ER), R160, R231, V247, D409, and M422. The next 3 helical transmembrane spans lie at 493 to 513 (FDYL…LSGL), 520 to 540 (LVLH…LPFP), and 545 to 565 (FWLG…IIKA).

The protein belongs to the squalene monooxygenase family. FAD serves as cofactor. In terms of tissue distribution, expressed mainly in inflorescences. Detected in seedlings, leaves, stems, and siliques.

The protein resides in the mitochondrion membrane. The catalysed reaction is squalene + reduced [NADPH--hemoprotein reductase] + O2 = (S)-2,3-epoxysqualene + oxidized [NADPH--hemoprotein reductase] + H2O + H(+). Its pathway is terpene metabolism; lanosterol biosynthesis; lanosterol from farnesyl diphosphate: step 2/3. In terms of biological role, catalyzes the stereospecific oxidation of squalene to (S)-2,3-epoxysqualene, and is considered to be a rate-limiting enzyme in steroid biosynthesis. Produces primarily oxidosqualene. The protein is Squalene epoxidase 2, mitochondrial (SQE2) of Arabidopsis thaliana (Mouse-ear cress).